The primary structure comprises 525 residues: Ribosomal protein S6 kinase beta-1 (525 aa).

The short motif at F28–L32 is the TOS motif element. Acidic residues predominate over residues L32–E46. The tract at residues L32–M54 is disordered. Residues F91–F352 form the Protein kinase domain. Residues L97 to V105 and K123 contribute to the ATP site. D218 acts as the Proton acceptor in catalysis. Residue T252 is modified to Phosphothreonine; by PDPK1. The 71-residue stretch at R353 to K423 folds into the AGC-kinase C-terminal domain. The interval S380–T399 is disordered. The segment covering Q381–T399 has biased composition (polar residues). Phosphoserine is present on S394. T412 carries the phosphothreonine; by MTOR, NEK6 and NEK7 modification. Residues E424 to L525 are autoinhibitory domain. Phosphoserine occurs at positions 434 and 441. T444 is subject to Phosphothreonine. Phosphoserine is present on residues S447 and S452. K516 carries the N6-acetyllysine modification.

Belongs to the protein kinase superfamily. AGC Ser/Thr protein kinase family. S6 kinase subfamily. Interacts with PPP1R9A/neurabin-1. Interacts with RPTOR. Interacts with IRS1. Interacts with EIF3B and EIF3C. Interacts with TRAF4. Interacts with POLDIP3. Interacts (via N-terminus) with IER5. In terms of processing, phosphorylation at Thr-412 is regulated by mTORC1. The phosphorylation at this site is maintained by an agonist-dependent autophosphorylation mechanism. Activated by phosphorylation at Thr-252 by PDPK1. Dephosphorylation by PPP1CC at Thr-412 in mitochondrion.

The protein resides in the cytoplasm. Its subcellular location is the synapse. The protein localises to the synaptosome. It localises to the mitochondrion outer membrane. It is found in the mitochondrion. It carries out the reaction L-seryl-[protein] + ATP = O-phospho-L-seryl-[protein] + ADP + H(+). It catalyses the reaction L-threonyl-[protein] + ATP = O-phospho-L-threonyl-[protein] + ADP + H(+). Activation requires multiple phosphorylation events on serine/threonine residues. Activation appears to be first mediated by phosphorylation of multiple sites in the autoinhibitory domain, which facilitates phosphorylation at Thr-412, disrupting the autoinhibitory mechanism and allowing phosphorylation of Thr-252 by PDPK1. The active conformation of the kinase is believed to be stabilized by a mechanism involving three conserved phosphorylation sites located in the kinase domain activation loop (Thr-252) and in the AGC-kinase C-terminal domain (Ser-394 in the middle of the tail/linker region and Thr-412 within a hydrophobic motif at its end). Activated by mTORC1; isoform Alpha I and isoform Alpha II are sensitive to rapamycin, which inhibits activating phosphorylation at Thr-412. Activated by PDPK1. Its function is as follows. Serine/threonine-protein kinase that acts downstream of mTOR signaling in response to growth factors and nutrients to promote cell proliferation, cell growth and cell cycle progression. Regulates protein synthesis through phosphorylation of EIF4B, RPS6 and EEF2K, and contributes to cell survival by repressing the pro-apoptotic function of BAD. Under conditions of nutrient depletion, the inactive form associates with the EIF3 translation initiation complex. Upon mitogenic stimulation, phosphorylation by the mechanistic target of rapamycin complex 1 (mTORC1) leads to dissociation from the EIF3 complex and activation. The active form then phosphorylates and activates several substrates in the pre-initiation complex, including the EIF2B complex and the cap-binding complex component EIF4B. Also controls translation initiation by phosphorylating a negative regulator of EIF4A, PDCD4, targeting it for ubiquitination and subsequent proteolysis. Promotes initiation of the pioneer round of protein synthesis by phosphorylating POLDIP3/SKAR. In response to IGF1, activates translation elongation by phosphorylating EEF2 kinase (EEF2K), which leads to its inhibition and thus activation of EEF2. Also plays a role in feedback regulation of mTORC2 by mTORC1 by phosphorylating MAPKAP1/SIN1, MTOR and RICTOR, resulting in the inhibition of mTORC2 and AKT1 signaling. Also involved in feedback regulation of mTORC1 and mTORC2 by phosphorylating DEPTOR. Mediates cell survival by phosphorylating the pro-apoptotic protein BAD and suppressing its pro-apoptotic function. Phosphorylates mitochondrial URI1 leading to dissociation of a URI1-PPP1CC complex. The free mitochondrial PPP1CC can then dephosphorylate RPS6KB1 at Thr-412, which is proposed to be a negative feedback mechanism for the RPS6KB1 anti-apoptotic function. Mediates TNF-alpha-induced insulin resistance by phosphorylating IRS1 at multiple serine residues, resulting in accelerated degradation of IRS1. In cells lacking functional TSC1-2 complex, constitutively phosphorylates and inhibits GSK3B. May be involved in cytoskeletal rearrangement through binding to neurabin. Phosphorylates and activates the pyrimidine biosynthesis enzyme CAD, downstream of MTOR. Following activation by mTORC1, phosphorylates EPRS and thereby plays a key role in fatty acid uptake by adipocytes and also most probably in interferon-gamma-induced translation inhibition. This is Ribosomal protein S6 kinase beta-1 (Rps6kb1) from Mus musculus (Mouse).